A 142-amino-acid chain; its full sequence is Large ribosomal subunit protein uL11 (142 aa).

It belongs to the universal ribosomal protein uL11 family. Part of the ribosomal stalk of the 50S ribosomal subunit. Interacts with L10 and the large rRNA to form the base of the stalk. L10 forms an elongated spine to which L12 dimers bind in a sequential fashion forming a multimeric L10(L12)X complex. One or more lysine residues are methylated.

Functionally, forms part of the ribosomal stalk which helps the ribosome interact with GTP-bound translation factors. This Mannheimia succiniciproducens (strain KCTC 0769BP / MBEL55E) protein is Large ribosomal subunit protein uL11.